Consider the following 289-residue polypeptide: 4-diphosphocytidyl-2-C-methyl-D-erythritol kinase (289 aa).

Residue Lys-10 is part of the active site. 94–104 (PVAAGLAGGSS) contacts ATP. Residue Asp-136 is part of the active site.

This sequence belongs to the GHMP kinase family. IspE subfamily.

The enzyme catalyses 4-CDP-2-C-methyl-D-erythritol + ATP = 4-CDP-2-C-methyl-D-erythritol 2-phosphate + ADP + H(+). The protein operates within isoprenoid biosynthesis; isopentenyl diphosphate biosynthesis via DXP pathway; isopentenyl diphosphate from 1-deoxy-D-xylulose 5-phosphate: step 3/6. Catalyzes the phosphorylation of the position 2 hydroxy group of 4-diphosphocytidyl-2C-methyl-D-erythritol. The protein is 4-diphosphocytidyl-2-C-methyl-D-erythritol kinase of Bacillus anthracis.